Here is a 113-residue protein sequence, read N- to C-terminus: Non-specific lipid-transfer protein 6 (113 aa).

The N-terminal stretch at 1–19 (MRSLLLAVCLVLALHCGEA) is a signal peptide. Cystine bridges form between Cys23-Cys70, Cys33-Cys47, Cys48-Cys95, and Cys68-Cys109.

It belongs to the plant LTP family.

Functionally, plant non-specific lipid-transfer proteins transfer phospholipids as well as galactolipids across membranes. May play a role in wax or cutin deposition in the cell walls of expanding epidermal cells and certain secretory tissues. This chain is Non-specific lipid-transfer protein 6 (LTP6), found in Arabidopsis thaliana (Mouse-ear cress).